Here is a 113-residue protein sequence, read N- to C-terminus: UPF0342 protein SZO_10960 (113 aa).

The protein belongs to the UPF0342 family.

In Streptococcus equi subsp. zooepidemicus (strain H70), this protein is UPF0342 protein SZO_10960.